A 457-amino-acid polypeptide reads, in one-letter code: Putative adhesion G protein-coupled receptor E4P (457 aa).

Residues 1–14 form the signal peptide; sequence MGSRFLLVLLSGAS. 6 disulfides stabilise this stretch: cysteine 15–cysteine 24, cysteine 18–cysteine 30, cysteine 32–cysteine 52, cysteine 58–cysteine 71, cysteine 65–cysteine 80, and cysteine 82–cysteine 103. The 39-residue stretch at 15 to 53 folds into the EGF-like 1 domain; that stretch reads CPPCPKYASCHNSTHCTCEDGFRARSGRTYFHDSSEKCE. Topologically, residues 16 to 191 are extracellular; sequence PPCPKYASCH…LAPKEDPVLT (176 aa). N-linked (GlcNAc...) asparagine glycosylation occurs at asparagine 26. An EGF-like 2; calcium-binding domain is found at 54-104; sequence DINECETGLAKCKYKAYCRNKVGGYICSCLVKYTLFNFLAGIIDYDHPDCY. N-linked (GlcNAc...) asparagine glycosylation is found at asparagine 106 and asparagine 162. A GAIN-B domain is found at 134 to 186; it reads DKRTKHICVYWEGSEGGWSTEGCSHVHSNGSYTKCKCFHLSSFAVLVALAPKE. Intrachain disulfides connect cysteine 141/cysteine 168 and cysteine 156/cysteine 170. The interval 141–186 is GPS; it reads CVYWEGSEGGWSTEGCSHVHSNGSYTKCKCFHLSSFAVLVALAPKE. Residues 192 to 212 traverse the membrane as a helical segment; it reads VITQVGLTISLLCLFLAILTF. Topologically, residues 213–223 are cytoplasmic; sequence LLCRPIQNTST. A helical membrane pass occupies residues 224–244; the sequence is SLHLELSLCLFLAHLLFLTGI. An N-linked (GlcNAc...) asparagine glycan is attached at asparagine 245. Residues 245 to 250 are Extracellular-facing; that stretch reads NRTEPE. A helical transmembrane segment spans residues 251–271; sequence VLCSIIAGLLHFLYLACFTWM. The Cytoplasmic portion of the chain corresponds to 272-299; that stretch reads LLEGLHLFLTVRNLKVANYTSTGRFKKR. A helical membrane pass occupies residues 300 to 320; sequence FMYPVGYGIPAVIIAVSAIVG. The Extracellular portion of the chain corresponds to 321 to 336; that stretch reads PQNYGTFTCWLKLDKG. A helical transmembrane segment spans residues 337–357; sequence FIWSFMGPVAVIILINLVFYF. The Cytoplasmic portion of the chain corresponds to 358 to 384; it reads QVLWILRSKLSSLNKEVSTIQDTRVMT. The chain crosses the membrane as a helical span at residues 385–405; the sequence is FKAISQLFILGCSWGLGFFMV. Topologically, residues 406–413 are extracellular; sequence EEVGKTIG. A helical transmembrane segment spans residues 414–434; the sequence is SIIAYSFTIINTLQGVLLFVV. The Cytoplasmic portion of the chain corresponds to 435–457; that stretch reads HCLLNRQVRLIILSVISLVPKSN.

The protein belongs to the G-protein coupled receptor 2 family. Adhesion G-protein coupled receptor (ADGR) subfamily. As to quaternary structure, forms a heterodimer, consisting of a large extracellular region (alpha subunit) non-covalently linked to a seven-transmembrane moiety (beta subunit). Post-translationally, glycosylated. Proteolytically cleaved into 2 subunits, an extracellular alpha subunit and a seven-transmembrane subunit.

It is found in the cell membrane. The protein resides in the secreted. In terms of biological role, may mediate the cellular interaction between myeloid cells and B-cells. In Homo sapiens (Human), this protein is Putative adhesion G protein-coupled receptor E4P.